We begin with the raw amino-acid sequence, 178 residues long: Probable DNA-directed RNA polymerase subunit delta (178 aa).

Residues Lys14–Trp81 enclose the HTH HARE-type domain. The tract at residues Leu114 to Asp178 is disordered. The span at Asp116–Asp178 shows a compositional bias: acidic residues.

This sequence belongs to the RpoE family. In terms of assembly, RNAP is composed of a core of 2 alpha, a beta and a beta' subunits. The core is associated with a delta subunit and one of several sigma factors.

In terms of biological role, participates in both the initiation and recycling phases of transcription. In the presence of the delta subunit, RNAP displays an increased specificity of transcription, a decreased affinity for nucleic acids, and an increased efficiency of RNA synthesis because of enhanced recycling. This is Probable DNA-directed RNA polymerase subunit delta from Staphylococcus epidermidis (strain ATCC 35984 / DSM 28319 / BCRC 17069 / CCUG 31568 / BM 3577 / RP62A).